The sequence spans 406 residues: Glucose-1-phosphate adenylyltransferase (406 aa).

Alpha-D-glucose 1-phosphate is bound by residues Tyr100, Gly165, 181 to 182 (EK), and Ser199.

It belongs to the bacterial/plant glucose-1-phosphate adenylyltransferase family. In terms of assembly, homotetramer.

It carries out the reaction alpha-D-glucose 1-phosphate + ATP + H(+) = ADP-alpha-D-glucose + diphosphate. Its pathway is glycan biosynthesis; glycogen biosynthesis. Involved in the biosynthesis of ADP-glucose, a building block required for the elongation reactions to produce glycogen. Catalyzes the reaction between ATP and alpha-D-glucose 1-phosphate (G1P) to produce pyrophosphate and ADP-Glc. The polypeptide is Glucose-1-phosphate adenylyltransferase (Streptomyces avermitilis (strain ATCC 31267 / DSM 46492 / JCM 5070 / NBRC 14893 / NCIMB 12804 / NRRL 8165 / MA-4680)).